Reading from the N-terminus, the 575-residue chain is Cytochrome P450 monooxygenase opaB (575 aa).

N-linked (GlcNAc...) asparagine glycosylation occurs at Asn6. The helical transmembrane segment at 37–57 (FILAAILASIILLIIRNSMLS) threads the bilayer. Residues Asn83 and Asn242 are each glycosylated (N-linked (GlcNAc...) asparagine). Cys521 is a heme binding site.

The protein belongs to the cytochrome P450 family. Heme serves as cofactor.

Its subcellular location is the membrane. It functions in the pathway secondary metabolite biosynthesis. Cytochrome P450 monooxygenase; part of the gene cluster that mediates the biosynthesis of oxepinamides, derivatives of anthranilyl-containing tripeptides that share an oxepin ring and a fused pyrimidinone moiety. The nonribosomal peptide synthetase (NRPS) opaA assembles the quinazolinone core with D-Phe incorporation. The first adenylation domain (A1) of opaA loads and activates anthranilic acid whereas the second A domain (A2) is for activating of L-Phe, which is then converted to D-form by the E domain. The third A domain (A3) is responsible for L-Ile activation and the terminal condensation domain C3 for cyclization and releasing the NRPS product protuboxepin K. The cytochrome P450 monooxygenase opaB then catalyzes alone the oxepin ring formation to convert protuboxepin K into protuboxepin A. The flavoenzyme opaC installs subsequently one hydroxyl group at the oxepin ring, accompanied by double bond migration, to form 15-epi-oxepinamide E. The epimerase opaE changes the D-Phe residue back to L-form, leading to oxepinamide E, which is further methylated at the hydroxyl group at C-12 by the O-methyltransferase OpaF to yield oxepinamide F. This Aspergillus ustus protein is Cytochrome P450 monooxygenase opaB.